We begin with the raw amino-acid sequence, 349 residues long: Green-sensitive opsin-3 (349 aa).

The Extracellular portion of the chain corresponds to 1–36 (MNGTEGNNFYIPMSNRTGLVRSPYEYPQYYLAEPWQ). N-linked (GlcNAc...) asparagine glycans are attached at residues Asn-2 and Asn-15. A helical membrane pass occupies residues 37–61 (FKLLAVYMFFLMCFGFPINGLTLVV). Over 62 to 73 (TAQHKKLRQPLN) the chain is Cytoplasmic. A helical transmembrane segment spans residues 74-99 (FILVNLAVAGTIMVCFGFTVTFYTAI). Residues 100–113 (NGYFVLGPTGCAIE) are Extracellular-facing. The cysteines at positions 110 and 187 are disulfide-linked. Residues 114–133 (GFMATLGGQISLWSLVVLAI) form a helical membrane-spanning segment. Over 134–152 (ERYIVVCKPMGSFKFSSNH) the chain is Cytoplasmic. The chain crosses the membrane as a helical span at residues 153 to 176 (AFAGIGFTWIMALSCAAPPLVGWS). Residues 177–202 (RYIPEGMQCSCGPDYYTLNPDYNNES) lie on the Extracellular side of the membrane. A glycan (N-linked (GlcNAc...) asparagine) is linked at Asn-200. Residues 203 to 230 (YVLYMFCCHFIFPVTTIFFTYGRLVCTV) form a helical membrane-spanning segment. The Cytoplasmic portion of the chain corresponds to 231-252 (KAAAAQQQESESTQKAEREVTR). A helical transmembrane segment spans residues 253–276 (MVILMVLGFLVAWTPYASVAAWIF). Residues 277-284 (FNRGAAFS) are Extracellular-facing. Residues 285–309 (AQFMAVPAFFSKSSSIFNPIIYVLL) form a helical membrane-spanning segment. Residue Lys-296 is modified to N6-(retinylidene)lysine. Over 310 to 349 (NKQFRNCMLTTLFCGKNPLGDDESSTVSTSKTEVSSVSPA) the chain is Cytoplasmic. Residues 329 to 349 (GDDESSTVSTSKTEVSSVSPA) are disordered. The span at 334 to 349 (STVSTSKTEVSSVSPA) shows a compositional bias: low complexity.

This sequence belongs to the G-protein coupled receptor 1 family. Opsin subfamily. Phosphorylated on some or all of the serine and threonine residues present in the C-terminal region.

Its subcellular location is the membrane. In terms of biological role, visual pigments are the light-absorbing molecules that mediate vision. They consist of an apoprotein, opsin, covalently linked to cis-retinal. The sequence is that of Green-sensitive opsin-3 (opn1mw3) from Danio rerio (Zebrafish).